Consider the following 770-residue polypeptide: 3-isopropylmalate dehydratase (770 aa).

Residues Cys354, Cys415, and Cys418 each contribute to the [4Fe-4S] cluster site.

It belongs to the aconitase/IPM isomerase family. Monomer. Requires [4Fe-4S] cluster as cofactor.

It carries out the reaction (2R,3S)-3-isopropylmalate = (2S)-2-isopropylmalate. It participates in amino-acid biosynthesis; L-leucine biosynthesis; L-leucine from 3-methyl-2-oxobutanoate: step 2/4. In terms of biological role, catalyzes the isomerization between 2-isopropylmalate and 3-isopropylmalate, via the formation of 2-isopropylmaleate. This chain is 3-isopropylmalate dehydratase (LEU1), found in Candida maltosa (Yeast).